A 543-amino-acid polypeptide reads, in one-letter code: Sodium-dependent lysophosphatidylcholine symporter 1 (543 aa).

Residues 1-14 (MAKGEGAESGSAAG) show a composition bias toward low complexity. The tract at residues 1-34 (MAKGEGAESGSAAGLLPTSILQSTERPAQVKKEP) is disordered. At 1 to 40 (MAKGEGAESGSAAGLLPTSILQSTERPAQVKKEPKKKKQQ) the chain is on the cytoplasmic side. Residues 41–70 (LSVCNKLCYALGGAPYQVTGCALGFFLQIY) form a helical membrane-spanning segment. Residues 71 to 94 (LLDVAQKDEEVVFCFSSFQVGPFS) are Extracellular-facing. A helical membrane pass occupies residues 95-115 (ASIILFVGRAWDAITDPLVGL). Topologically, residues 116-127 (CISKSPWTCLGR) are cytoplasmic. A helical transmembrane segment spans residues 128-147 (LMPWIIFSTPLAVIAYFLIW). Over 148–157 (FVPDFPHGQT) the chain is Extracellular. A helical membrane pass occupies residues 158 to 182 (YWYLLFYCLFETMVTCFHVPYSALT). Over 183–189 (MFISTEQ) the chain is Cytoplasmic. A helical membrane pass occupies residues 190 to 221 (TERDSATAYRMTVEVLGTVLGTAIQGQIVGQA). Topologically, residues 222–241 (DTPCFQDLNSSTVASQSANH) are extracellular. An intrachain disulfide couples Cys225 to Cys473. N-linked (GlcNAc...) asparagine glycosylation is found at Asn230 and Asn240. Residues 242–275 (THGTTSHRETQKAYLLAAGVIVCIYIICAVILIL) form a helical membrane-spanning segment. The Cytoplasmic portion of the chain corresponds to 276 to 306 (GVREQREPYEAQQSEPIAYFRGLRLVMSHGP). A helical transmembrane segment spans residues 307 to 333 (YIKLITGFLFTSLAFMLVEGNFVLFCT). The Extracellular portion of the chain corresponds to 334–344 (YTLGFRNEFQN). The helical transmembrane segment at 345 to 363 (LLLAIMLSATLTIPIWQWF) threads the bilayer. Residues 364-367 (LTRF) are Cytoplasmic-facing. Residues 368 to 389 (GKKTAVYVGISSAVPFLILVAL) form a helical membrane-spanning segment. Residues 390 to 392 (MES) lie on the Extracellular side of the membrane. Residues 393-429 (NLIITYAVAVAAGISVAAAFLLPWSMLPDVIDDFHLK) form a helical membrane-spanning segment. Residues 430–439 (QPHFHGTEPI) are Cytoplasmic-facing. A helical membrane pass occupies residues 440-466 (FFSFYVFFTKFASGVSLGISTLSLDFA). The Extracellular segment spans residues 467–478 (GYQTRGCSQPER). Residues 479–502 (VKFTLNMLVTMAPIVLILLGLLLF) traverse the membrane as a helical segment. The Cytoplasmic segment spans residues 503-543 (KMYPIDEERRRQNKKALQALRDEASSSGCSETDSTELASIL).

Belongs to the major facilitator superfamily. As to quaternary structure, interacts with ERVFRD-1/syncytin-2. In placenta, associated with trophoblast cells.

Its subcellular location is the cell membrane. The protein localises to the endoplasmic reticulum membrane. It carries out the reaction a 1-acyl-sn-glycero-3-phosphocholine(in) + Na(+)(in) = a 1-acyl-sn-glycero-3-phosphocholine(out) + Na(+)(out). It catalyses the reaction 1-(4Z,7Z,10Z,13Z,16Z,19Z-docosahexaenoyl)-sn-glycero-3-phosphocholine(in) + Na(+)(in) = 1-(4Z,7Z,10Z,13Z,16Z,19Z-docosahexaenoyl)-sn-glycero-3-phosphocholine(out) + Na(+)(out). The enzyme catalyses 1-(9Z-octadecenoyl)-sn-glycero-3-phosphocholine(in) + Na(+)(in) = 1-(9Z-octadecenoyl)-sn-glycero-3-phosphocholine(out) + Na(+)(out). The catalysed reaction is 1-hexadecanoyl-sn-glycero-3-phosphocholine(in) + Na(+)(in) = 1-hexadecanoyl-sn-glycero-3-phosphocholine(out) + Na(+)(out). It carries out the reaction a 1-acyl-sn-glycero-3-phosphoethanolamine(in) + Na(+)(in) = a 1-acyl-sn-glycero-3-phosphoethanolamine(out) + Na(+)(out). Functionally, sodium-dependent lysophosphatidylcholine (LPC) symporter, which plays an essential role for blood-brain barrier formation and function. Specifically expressed in endothelium of the blood-brain barrier of micro-vessels and transports LPC into the brain. Transport of LPC is essential because it constitutes the major mechanism by which docosahexaenoic acid (DHA), an omega-3 fatty acid that is essential for normal brain growth and cognitive function, enters the brain. Transports LPC carrying long-chain fatty acids such LPC oleate and LPC palmitate with a minimum acyl chain length of 14 carbons. Does not transport docosahexaenoic acid in unesterified fatty acid. Specifically required for blood-brain barrier formation and function, probably by mediating lipid transport. Not required for central nervous system vascular morphogenesis. Acts as a transporter for tunicamycin, an inhibitor of asparagine-linked glycosylation. In placenta, acts as a receptor for ERVFRD-1/syncytin-2 and is required for trophoblast fusion. In Homo sapiens (Human), this protein is Sodium-dependent lysophosphatidylcholine symporter 1.